The chain runs to 206 residues: Large ribosomal subunit protein uL4 (206 aa).

The segment at 46-77 is disordered; that stretch reads GTRAQKDREQVRHSTKKPFKQKGTGRARAGMT. Basic residues predominate over residues 58–70; the sequence is HSTKKPFKQKGTG.

Belongs to the universal ribosomal protein uL4 family. In terms of assembly, part of the 50S ribosomal subunit.

Functionally, one of the primary rRNA binding proteins, this protein initially binds near the 5'-end of the 23S rRNA. It is important during the early stages of 50S assembly. It makes multiple contacts with different domains of the 23S rRNA in the assembled 50S subunit and ribosome. In terms of biological role, forms part of the polypeptide exit tunnel. The sequence is that of Large ribosomal subunit protein uL4 from Polaromonas naphthalenivorans (strain CJ2).